Consider the following 512-residue polypeptide: Cercosporin MFS transporter CTB4 (512 aa).

Helical transmembrane passes span 72-92 (WVITMSLALYALSTTFSSSVF), 110-130 (VVLGCTSLFMVGFATGPIFWG), 142-162 (LLAGYLGFAVLQLPIADARSL), 170-190 (FLGGFFGAAPSSILSGILADI), 202-222 (TVGAFLTIGPILGPLIGSVLV), 230-250 (WIANVVAIASFLIALSTFPFL), 306-326 (ILLMMTLYVSVSFGLLYNFFL), 343-363 (ASLPLISILVGAIIAGALLSF), 383-403 (LLLMMVGAVSLPAGMFLFAWT), 407-427 (TMNPWPQILSGIPTGFGIHLI), 456-476 (LFAAGFPILATSMYAAIGVKW), and 480-500 (ILALLAVAMIPIPILFYYFGA).

This sequence belongs to the major facilitator superfamily. CAR1 family.

The protein resides in the cell membrane. Its function is as follows. MFS transporter; part of the gene cluster that mediates the biosynthesis of cercosporin, a light-activated, non-host-selective toxin. The perylenequinone chromophore of cercosporin absorbs light energy to attain an electronically-activated triplet state and produces active oxygen species such as the hydroxyl radical, superoxide, hydrogen peroxide or singlet oxygen upon reaction with oxygen molecules. These reactive oxygen species cause damage to various cellular components including lipids, proteins and nucleic acids. Responsible for secretion and accumulation of cercosporin, but does not play any roles in self-protection against the toxicity of cercosporin. The polypeptide is Cercosporin MFS transporter CTB4 (Cercospora nicotianae (Barn spot disease fungus)).